Here is a 223-residue protein sequence, read N- to C-terminus: Noggin-3 (223 aa).

The signal sequence occupies residues 1–23 (MDNIPYFLATVLIFSLGFRIEEG). N-linked (GlcNAc...) asparagine glycans are attached at residues N60 and N93.

It belongs to the noggin family. In terms of assembly, homodimer; disulfide-linked.

The protein localises to the secreted. Functionally, may function as an inhibitor of bone morphogenetic proteins (BMP) signaling during later stages of development including late phases of dorsoventral patterning, to refine the early pattern set up by the interaction of chordino and BMP2/4. Not involved in organizer function or early phases of dorsoventral pattern formation. This chain is Noggin-3 (nog3), found in Danio rerio (Zebrafish).